The primary structure comprises 419 residues: MEKERETLQVWKKRVEQELDRVIAFWMEHSHDQEHGGFFTCLGRDGKVYDHLKYVWLQGRQVWMYCRLYRSFERFRRVELLDAARAGGEFLLRYARVAPPGKKCAFVLTRDGRPVKVQRTIFSECFYTMAMNELWKVTGEVRYQSEAIEMMDQIIHWVREDPAGLGRPQLSGALATEPMAVPMMLLSLVEQLGEEDEELTNMYAELGDWCVHRILQHVQRDGQVVLENVSEDGKELPGCLGRHQNPGHTLEAGWFLLQYALRKGDPKLRMHIIDKFLLLPFHSGWDPEHGGLFYFQDADGLCPTQLEWNMKLWWPHSEAMIAFLMGYSDSGDPALLHLFYKVAEYTFRQFRDPEYGEWFGYLNQEGKVALTIKGGPFKGCFHVPRCLAMCEQILGALLQRLEPAPLDSSPAVSTHEGSK.

Residues 185-206 form a leucine-zipper region; sequence LLSLVEQLGEEDEELTNMYAEL. Residue Ser418 is modified to Phosphoserine.

Belongs to the N-acylglucosamine 2-epimerase family. As to quaternary structure, homodimer. Forms a heterodimer with renin and inhibits its activity.

It catalyses the reaction an N-acyl-D-glucosamine = an N-acyl-D-mannosamine. It functions in the pathway amino-sugar metabolism; N-acetylneuraminate degradation. Functionally, catalyzes the interconversion of N-acetylglucosamine to N-acetylmannosamine. Involved in the N-glycolylneuraminic acid (Neu5Gc) degradation pathway. The polypeptide is N-acylglucosamine 2-epimerase (Renbp) (Mus musculus (Mouse)).